Reading from the N-terminus, the 430-residue chain is Enolase (430 aa).

Residue Gln168 participates in (2R)-2-phosphoglycerate binding. Glu210 serves as the catalytic Proton donor. Residues Asp247, Glu288, and Asp315 each coordinate Mg(2+). Positions 340, 369, 370, and 391 each coordinate (2R)-2-phosphoglycerate. The Proton acceptor role is filled by Lys340.

Belongs to the enolase family. Mg(2+) is required as a cofactor.

The protein resides in the cytoplasm. The protein localises to the secreted. Its subcellular location is the cell surface. The catalysed reaction is (2R)-2-phosphoglycerate = phosphoenolpyruvate + H2O. The protein operates within carbohydrate degradation; glycolysis; pyruvate from D-glyceraldehyde 3-phosphate: step 4/5. Catalyzes the reversible conversion of 2-phosphoglycerate (2-PG) into phosphoenolpyruvate (PEP). It is essential for the degradation of carbohydrates via glycolysis. The polypeptide is Enolase (Picosynechococcus sp. (strain ATCC 27264 / PCC 7002 / PR-6) (Agmenellum quadruplicatum)).